We begin with the raw amino-acid sequence, 1131 residues long: MGMACLTMTEMEGTSTSPVHQNGDIPGNANSVKQIDPVLQVYLYHSLGKAEGDYLKFPAGEYVAEEICVAASKACGITPVYHSMFALMNETERIWYPPNHVFHVDESTRHNVLYRIRFYFPYWYCNGSNRTYRHGISRGAEAPLLDDFVMSYLFAQWRHDFLYGWVKIPVTHETQEECLGMAVLDMMRIAKEKDQTPLDIYSSVSYKTFLPKCVRAKIQDYHILTRKRIRYRFRRFIEQFSHCKATARNLKLKYLINLETLQSAFYTEQFEVKEPGRGPSGEEIFATIIITGNGGIQWSRGKHKESETLTEQDLQLYCDFPDIIDVSIKQANQEGSNESRIVTIHKQDGKSLEIELSSLREALSFVSLIDGYYRLTADAHHYLCKEVAPPMVLENIQSNCHGPISMDFAISKLKKAGNQTGLFVLRCSPKDFNKYFLTFAVERENVTEYKHCLITKNENGEYNLSGTRKNFSNLKDLLNCYQMETVRSDSIIFQFTKCCPPKPKDKSNLLVFRTNGISDVPTSPTLQRHNNVNQMVFHKIRNEDLIFNESLGQGTFTKIFKGVRREVGDYGQLHETEVLLKVLDKAHRNYSESFFEAASMMSQLSHKHLVLNYGVCVCGEENILVQEFVKFGSLDTYLKKNKNSINILWKLEVAKQLAWAMHFLEEKTLIHGNVCAKNILLIREEDRKTGNPPFIKLSDPGISITVLPKDILQERIPWVPPECIENPKNLNLATDKWSFGTTLWEICSGGDKPLNALDSQRKLQFYEDRHQLPAPKWTELANLINNCMDYEPDFRPSFRAIIRDLNSLFTPDYELLTENDMLPNMRIGALGFSGAFEDRDPTQFEERHLKFLQQLGKGNFGSVEMCRYDPLQDNTGEVVAVKKLQHSTEEHLRDFEREIEILKSLQHDNIVKYKGVCYSAGRRNLRLIMEYLPYGSLRDYLQKHKERIDHKKLLQYTSQICKGMEYLGTKRYIHRDLATRNILVENENRVKIGDFGLTKVLPQDKEYYKVKEPGESPIFWYAPESLTESKFSVASDVWSFGVVLYELFTYIEKSKSPPAEFMRMIGNDKQGQMIVFHLIELLKNNGRLPRPDGCPDEIYIIMTECWNNNVNQRPSFRDLALRVDQIRDSMA.

Positions 1-239 (MGMACLTMTE…RYRFRRFIEQ (239 aa)) are interaction with cytokine/interferon/growth hormone receptors. In terms of domain architecture, FERM spans 37–380 (PVLQVYLYHS…GYYRLTADAH (344 aa)). Tyr119 carries the phosphotyrosine; by autocatalysis modification. Phosphotyrosine occurs at positions 372 and 373. In terms of domain architecture, SH2; atypical spans 401–482 (HGPISMDFAI…NLKDLLNCYQ (82 aa)). Ser523 is modified (phosphoserine). The region spanning 545–809 (LIFNESLGQG…AIIRDLNSLF (265 aa)) is the Protein kinase 1 domain. Phosphotyrosine occurs at positions 570 and 813. The Protein kinase 2 domain occupies 849–1126 (LKFLQQLGKG…RDLALRVDQI (278 aa)). ATP is bound at residue 855–863 (LGKGNFGSV). A Phosphotyrosine; by autocatalysis modification is found at Tyr868. Lys882 contacts ATP. Tyr966 and Tyr972 each carry phosphotyrosine; by autocatalysis. Asp976 serves as the catalytic Proton acceptor. Phosphotyrosine; by autocatalysis is present on residues Tyr1007 and Tyr1008.

The protein belongs to the protein kinase superfamily. Tyr protein kinase family. JAK subfamily. Interacts with IL23R, SKB1 and STAM2. Interacts with EPOR. Interacts with LYN. Interacts with SIRPA. Interacts with SH2B1. Interacts with TEC. Interacts with IFNGR2 (via intracellular domain). Interacts with LEPR (Isoform B). Interacts with HSP90AB1; promotes functional activation in a heat shock-dependent manner. Interacts with STRA6. Interacts with ASB2; the interaction targets JAK2 for Notch-induced proteasomal degradation. It depends on Mg(2+) as a cofactor. Post-translationally, autophosphorylated, leading to regulate its activity. Leptin promotes phosphorylation on tyrosine residues, including phosphorylation on Tyr-813. Autophosphorylation on Tyr-119 in response to EPO down-regulates its kinase activity. Autophosphorylation on Tyr-868, Tyr-966 and Tyr-972 in response to growth hormone (GH) are required for maximal kinase activity. Also phosphorylated by TEC. Phosphorylated on tyrosine residues in response to interferon gamma signaling. Phosphorylated on tyrosine residues in response to a signaling cascade that is activated by increased cellular retinol. Undergoes Notch-induced ubiquitination and subsequent proteasomal degradation which is mediated by ASB1 or ASB2, the substrate-recognition components of probable ECS E3 ubiquitin-protein ligase complexes.

It localises to the endomembrane system. The protein resides in the cytoplasm. Its subcellular location is the nucleus. The catalysed reaction is L-tyrosyl-[protein] + ATP = O-phospho-L-tyrosyl-[protein] + ADP + H(+). Its activity is regulated as follows. Regulated by autophosphorylation, can both activate or decrease activity. Heme regulates its activity by enhancing the phosphorylation on Tyr-1007 and Tyr-1008. In terms of biological role, non-receptor tyrosine kinase involved in various processes such as cell growth, development, differentiation or histone modifications. Mediates essential signaling events in both innate and adaptive immunity. In the cytoplasm, plays a pivotal role in signal transduction via its association with type I receptors such as growth hormone (GHR), prolactin (PRLR), leptin (LEPR), erythropoietin (EPOR), thrombopoietin (THPO); or type II receptors including IFN-alpha, IFN-beta, IFN-gamma and multiple interleukins. Following ligand-binding to cell surface receptors, phosphorylates specific tyrosine residues on the cytoplasmic tails of the receptor, creating docking sites for STATs proteins. Subsequently, phosphorylates the STATs proteins once they are recruited to the receptor. Phosphorylated STATs then form homodimer or heterodimers and translocate to the nucleus to activate gene transcription. For example, cell stimulation with erythropoietin (EPO) during erythropoiesis leads to JAK2 autophosphorylation, activation, and its association with erythropoietin receptor (EPOR) that becomes phosphorylated in its cytoplasmic domain. Then, STAT5 (STAT5A or STAT5B) is recruited, phosphorylated and activated by JAK2. Once activated, dimerized STAT5 translocates into the nucleus and promotes the transcription of several essential genes involved in the modulation of erythropoiesis. Part of a signaling cascade that is activated by increased cellular retinol and that leads to the activation of STAT5 (STAT5A or STAT5B). In addition, JAK2 mediates angiotensin-2-induced ARHGEF1 phosphorylation. Plays a role in cell cycle by phosphorylating CDKN1B. Cooperates with TEC through reciprocal phosphorylation to mediate cytokine-driven activation of FOS transcription. In the nucleus, plays a key role in chromatin by specifically mediating phosphorylation of 'Tyr-41' of histone H3 (H3Y41ph), a specific tag that promotes exclusion of CBX5 (HP1 alpha) from chromatin. Up-regulates the potassium voltage-gated channel activity of KCNA3. This is Tyrosine-protein kinase JAK2 from Sus scrofa (Pig).